The following is a 445-amino-acid chain: E3 ubiquitin-protein ligase MYLIP (445 aa).

The FERM domain maps to 1–279 (MLCYVTRPDA…ETHAFYRCDT (279 aa)). Cys360, Cys363, and Cys368 together coordinate Fe cation. An RING-type zinc finger spans residues 387-422 (CMVCCEEEINSTFCPCGHTVCCESCAAQLQSCPVCR). The interval 431–433 (VYL) is critical for homodimerization.

Homodimer. Interacts with the E2 ubiquitin-conjugating enzyme, UBE2D1 (via RING-type zinc finger). Interacts with myosin regulatory light chain (MRLC) and TMEM4. Post-translationally, autoubiquitinated. Ubiquitously expressed.

The protein resides in the cytoplasm. It is found in the cell membrane. The catalysed reaction is S-ubiquitinyl-[E2 ubiquitin-conjugating enzyme]-L-cysteine + [acceptor protein]-L-lysine = [E2 ubiquitin-conjugating enzyme]-L-cysteine + N(6)-ubiquitinyl-[acceptor protein]-L-lysine.. It participates in protein modification; protein ubiquitination. Can bind 1 iron ion per dimer. Iron binding seems to decrease LDLR degradation activity. Its function is as follows. E3 ubiquitin-protein ligase that mediates ubiquitination and subsequent proteasomal degradation of myosin regulatory light chain (MRLC), LDLR, VLDLR and LRP8. Activity depends on E2 enzymes of the UBE2D family. Proteasomal degradation of MRLC leads to inhibit neurite outgrowth in presence of NGF by counteracting the stabilization of MRLC by saposin-like protein (CNPY2/MSAP) and reducing CNPY2-stimulated neurite outgrowth. Acts as a sterol-dependent inhibitor of cellular cholesterol uptake by mediating ubiquitination and subsequent degradation of LDLR. The protein is E3 ubiquitin-protein ligase MYLIP (MYLIP) of Homo sapiens (Human).